Reading from the N-terminus, the 539-residue chain is MAKLIAFNQEAREGILKGVDALANAVKVTLGPRGRNVVLQKAFGSPTVTNDGVTIAREIDLSDPFENLGAQLVKSVAVKTNDIAGDGTTTATLLAQAVVTEGLRNVAAGANPIELNRGIAAGSEFVVGKLRERATDVSSAADIANVATVSSRDPEVGDMVAAAMEKVGKDGVVTVEESQSIESYLDVTEGVSFDKGFLSPYFITDTDTQHAVLEQPAILLVRNKISSLPDFLPVLEKALEASKPILIIAEDVEGEPLQTLVVNSIRKTLRAVAVKAPYFGERRKAFMDDLAVVTGATVIDPEVGVNLNEAGAEVFGTARRVTVTKDETIIVDGAGTAEAVENRRAQIRREIENTDSAWDREKAEERLAKLSGGVAVIKVGAATETEVSERKLRVEDAINAARAAAQEGVIAGGGSALVQISKELREFAQEFEGDAKIGVIALANALAKPTYWIADNAGLDGAVVVSKVSELPNGEGFNAATLEYGNLIEQGIIDPVKVTHSAVVNATSVARMVLTTEASVVEKPAAPAPEAGHHHHHHH.

Residues 29–32, 86–90, G413, 478–480, and D494 each bind ATP; these read TLGP, DGTTT, and NAA.

The protein belongs to the chaperonin (HSP60) family. As to quaternary structure, forms a cylinder of 14 subunits composed of two heptameric rings stacked back-to-back. Interacts with the co-chaperonin GroES.

The protein localises to the cytoplasm. The catalysed reaction is ATP + H2O + a folded polypeptide = ADP + phosphate + an unfolded polypeptide.. Its function is as follows. Together with its co-chaperonin GroES, plays an essential role in assisting protein folding. The GroEL-GroES system forms a nano-cage that allows encapsulation of the non-native substrate proteins and provides a physical environment optimized to promote and accelerate protein folding. The chain is Chaperonin GroEL 1 from Corynebacterium diphtheriae (strain ATCC 700971 / NCTC 13129 / Biotype gravis).